Consider the following 253-residue polypeptide: Phosphoribosylaminoimidazole-succinocarboxamide synthase (253 aa).

It belongs to the SAICAR synthetase family.

It carries out the reaction 5-amino-1-(5-phospho-D-ribosyl)imidazole-4-carboxylate + L-aspartate + ATP = (2S)-2-[5-amino-1-(5-phospho-beta-D-ribosyl)imidazole-4-carboxamido]succinate + ADP + phosphate + 2 H(+). It participates in purine metabolism; IMP biosynthesis via de novo pathway; 5-amino-1-(5-phospho-D-ribosyl)imidazole-4-carboxamide from 5-amino-1-(5-phospho-D-ribosyl)imidazole-4-carboxylate: step 1/2. This is Phosphoribosylaminoimidazole-succinocarboxamide synthase from Parvibaculum lavamentivorans (strain DS-1 / DSM 13023 / NCIMB 13966).